The sequence spans 154 residues: Ribonuclease H (154 aa).

The RNase H type-1 domain maps to 1 to 142; sequence MRKQIEIFTD…CDELAKQGAE (142 aa). Mg(2+) contacts are provided by D10, E48, D70, and D134.

Belongs to the RNase H family. As to quaternary structure, monomer. Requires Mg(2+) as cofactor.

The protein resides in the cytoplasm. It catalyses the reaction Endonucleolytic cleavage to 5'-phosphomonoester.. Its function is as follows. Endonuclease that specifically degrades the RNA of RNA-DNA hybrids. This Actinobacillus succinogenes (strain ATCC 55618 / DSM 22257 / CCUG 43843 / 130Z) protein is Ribonuclease H.